We begin with the raw amino-acid sequence, 180 residues long: Meiotic recombination protein rec15 (180 aa).

Homomer. Interacts (via C-terminus) with hop1 (via C-terminus); the interaction is direct. Interacts (via C-terminus) with rec10; the interaction is direct. Interacts with mde2; the interaction is direct.

Its subcellular location is the nucleus. It localises to the chromosome. Functionally, required during the early stages of meiosis for meiotic recombination. The protein is Meiotic recombination protein rec15 of Schizosaccharomyces pombe (strain 972 / ATCC 24843) (Fission yeast).